The sequence spans 707 residues: Molybdenum cofactor sulfurase (707 aa).

Residue lysine 206 is modified to N6-(pyridoxal phosphate)lysine. The active site involves cysteine 365. An MOSC domain is found at 558–705 (QWLENALDMT…VEAGSAVRFF (148 aa)).

Belongs to the class-V pyridoxal-phosphate-dependent aminotransferase family. MOCOS subfamily. It depends on pyridoxal 5'-phosphate as a cofactor.

It carries out the reaction Mo-molybdopterin + L-cysteine + AH2 = thio-Mo-molybdopterin + L-alanine + A + H2O. It functions in the pathway cofactor biosynthesis; molybdopterin biosynthesis. In terms of biological role, sulfurates the molybdenum cofactor. Sulfation of molybdenum is essential for xanthine dehydrogenase (XDH) and aldehyde oxidase (ADO) enzymes in which molybdenum cofactor is liganded by 1 oxygen and 1 sulfur atom in active form. The protein is Molybdenum cofactor sulfurase (mocs-1) of Caenorhabditis briggsae.